The following is a 444-amino-acid chain: Methylenetetrahydrofolate--tRNA-(uracil-5-)-methyltransferase TrmFO (444 aa).

9 to 14 serves as a coordination point for FAD; sequence GAGMAG.

Belongs to the MnmG family. TrmFO subfamily. FAD is required as a cofactor.

The protein resides in the cytoplasm. It carries out the reaction uridine(54) in tRNA + (6R)-5,10-methylene-5,6,7,8-tetrahydrofolate + NADH + H(+) = 5-methyluridine(54) in tRNA + (6S)-5,6,7,8-tetrahydrofolate + NAD(+). It catalyses the reaction uridine(54) in tRNA + (6R)-5,10-methylene-5,6,7,8-tetrahydrofolate + NADPH + H(+) = 5-methyluridine(54) in tRNA + (6S)-5,6,7,8-tetrahydrofolate + NADP(+). In terms of biological role, catalyzes the folate-dependent formation of 5-methyl-uridine at position 54 (M-5-U54) in all tRNAs. This Cereibacter sphaeroides (strain KD131 / KCTC 12085) (Rhodobacter sphaeroides) protein is Methylenetetrahydrofolate--tRNA-(uracil-5-)-methyltransferase TrmFO.